Reading from the N-terminus, the 250-residue chain is 5-oxoprolinase subunit A (250 aa).

This sequence belongs to the LamB/PxpA family. Forms a complex composed of PxpA, PxpB and PxpC.

It carries out the reaction 5-oxo-L-proline + ATP + 2 H2O = L-glutamate + ADP + phosphate + H(+). Catalyzes the cleavage of 5-oxoproline to form L-glutamate coupled to the hydrolysis of ATP to ADP and inorganic phosphate. This chain is 5-oxoprolinase subunit A, found in Staphylococcus aureus (strain NCTC 8325 / PS 47).